We begin with the raw amino-acid sequence, 112 residues long: Late expression factor 11 (112 aa).

Belongs to the baculoviridae LEF-11 family.

Its function is as follows. Involved in late/very late gene activation. The sequence is that of Late expression factor 11 (LEF-11) from Helicoverpa zea (Corn earworm moth).